We begin with the raw amino-acid sequence, 249 residues long: Vesicle-associated membrane protein-associated protein A (249 aa).

N-acetylalanine is present on Ala-2. The Cytoplasmic segment spans residues 2–227; it reads ASASGAMAKH…ASFRDNVTSP (226 aa). Residues 14–131 form the MSP domain; that stretch reads ILVLDPPTDL…MDSKLRCVFE (118 aa). The tract at residues 50–53 is phosphorylated FFAT motif binding; sequence KVKT. At Lys-125 the chain carries N6-acetyllysine. The span at 135 to 144 shows a compositional bias: basic and acidic residues; it reads ENDKLNDMEP. The segment at 135 to 167 is disordered; the sequence is ENDKLNDMEPSKAVPLNASKQDGPMPKPHSVSL. The residue at position 166 (Ser-166) is a Phosphoserine. A coiled-coil region spans residues 169 to 205; that stretch reads DTETRKLMEECKRLQGEMMKLSEENRHLRDEGLRLRK. Phosphothreonine is present on Thr-170. Ser-214, Ser-216, and Ser-219 each carry phosphoserine. Residues 228–248 traverse the membrane as a helical; Anchor for type IV membrane protein segment; the sequence is LPSLLVVIAAIFIGFFLGKFI.

This sequence belongs to the VAMP-associated protein (VAP) (TC 9.B.17) family. In terms of assembly, homodimer; disulfide-linked. Heterodimer with VAPB. Interacts with VAMP1, VAMP2, STX1A, BET1, SEC22C and with the C-terminal domain of OCLN. Interacts (via MSP domain) with OSBPL1A (via FFAT motif). Interacts (via MSP domain) with ZFYVE27; may retain ZFYVE27 in the endoplasmic reticulum and regulate its function in cell projections formation. Interacts with OSBP. Interacts (via C-terminus) with RSAD2/viperin (via C-terminus). Interacts with IFITM3. Interacts with OSBPL3 (phosphorylated form). Interacts with KIF5A in a ZFYVE27-dependent manner. Interacts (via MSP domain) with STARD3 (via phosphorylated FFAT motif); this interaction recruits VAPA to the endosome. Interacts with STARD3NL (via FFAT motif). Interacts with CERT1. Interacts with PLEKHA3 and SACM1L to form a ternary complex. Interacts with VPS13A (via FFAT motif). Interacts with RB1CC1 (via phosphorylated FFAT motif), MIGA2 (via phosphorylated FFAT motif), RMDN3 (via phosphorylated FFAT motif), KCNB1 (via phosphorylated FFAT motif) and KCNB2 (via phosphorylated FFAT motif). Interacts (via MSP domain) with WDR44 (via FFAT-like motif); the interactions connect the endoplasmic reticulum (ER) with the endosomal tubule. As to quaternary structure, (Microbial infection) Interacts with HCV protein NS5A and NS5B. Ubiquitous.

Its subcellular location is the endoplasmic reticulum membrane. It is found in the cell membrane. The protein localises to the cell junction. It localises to the tight junction. The protein resides in the nucleus membrane. Its function is as follows. Endoplasmic reticulum (ER)-anchored protein that mediates the formation of contact sites between the ER and endosomes via interaction with FFAT motif-containing proteins such as STARD3 or WDR44. STARD3-VAPA interaction enables cholesterol transfer from the ER to endosomes. Via interaction with WDR44 participates in neosynthesized protein export. In addition, recruited to the plasma membrane through OSBPL3 binding. The OSBPL3-VAPA complex stimulates RRAS signaling which in turn attenuates integrin beta-1 (ITGB1) activation at the cell surface. With OSBPL3, may regulate ER morphology. May play a role in vesicle trafficking. This is Vesicle-associated membrane protein-associated protein A from Homo sapiens (Human).